The following is a 629-amino-acid chain: ATP-dependent DNA helicase II subunit 2 (629 aa).

The region spanning Ser-254–Gln-476 is the Ku domain. Residues Asp-608–Ser-620 are compositionally biased toward basic and acidic residues. The disordered stretch occupies residues Asp-608–Asn-629.

It belongs to the ku80 family. As to quaternary structure, heterodimer of YKU70/HDF1 and YKU80/HDF2. Interacts with SIR4.

It is found in the nucleus. The protein localises to the chromosome. The protein resides in the telomere. The catalysed reaction is ATP + H2O = ADP + phosphate + H(+). Functionally, single-stranded DNA-dependent ATP-dependent helicase. Involved in non-homologous end joining (NHEJ) DNA double strand break repair. DNA-binding is sequence-independent but has a high affinity to nicks in double-stranded DNA and to the ends of duplex DNA. Binds to naturally occurring chromosomal ends, and therefore provides chromosomal end protection. Appears to have a role in recruitment of telomerase and CDC13 to the telomere and the subsequent telomere elongation. Required also for telomere recombination to repair telomeric ends in the absence of telomerase. KU70, of the KU70/KU80 heterodimer, binds to the stem loop of TLC1, the RNA component of telomerase. Involved in telomere maintenance. Interacts with telomeric repeats and subtelomeric sequences thereby controlling telomere length and protecting against subtelomeric rearrangement. Maintains telomeric chromatin, which is involved in silencing the expression of genes located at the telomere. Required for mating-type switching. The protein is ATP-dependent DNA helicase II subunit 2 (YKU80) of Saccharomyces cerevisiae (strain ATCC 204508 / S288c) (Baker's yeast).